The chain runs to 766 residues: 5-methyltetrahydropteroyltriglutamate--homocysteine methyltransferase (766 aa).

5-methyltetrahydropteroyltri-L-glutamate is bound by residues 16 to 19 (RELK) and Lys119. L-homocysteine is bound by residues 440 to 442 (IGS) and Glu493. L-methionine is bound by residues 440–442 (IGS) and Glu493. Residues 524–525 (RC) and Trp570 contribute to the 5-methyltetrahydropteroyltri-L-glutamate site. Asp608 contacts L-homocysteine. Residue Asp608 coordinates L-methionine. Residue Glu614 coordinates 5-methyltetrahydropteroyltri-L-glutamate. His650, Cys652, and Glu674 together coordinate Zn(2+). Catalysis depends on His703, which acts as the Proton donor. Cys735 contributes to the Zn(2+) binding site.

Belongs to the vitamin-B12 independent methionine synthase family. Zn(2+) is required as a cofactor.

The enzyme catalyses 5-methyltetrahydropteroyltri-L-glutamate + L-homocysteine = tetrahydropteroyltri-L-glutamate + L-methionine. It functions in the pathway amino-acid biosynthesis; L-methionine biosynthesis via de novo pathway; L-methionine from L-homocysteine (MetE route): step 1/1. In terms of biological role, catalyzes the transfer of a methyl group from 5-methyltetrahydrofolate to homocysteine resulting in methionine formation. The sequence is that of 5-methyltetrahydropteroyltriglutamate--homocysteine methyltransferase from Pseudomonas aeruginosa (strain ATCC 15692 / DSM 22644 / CIP 104116 / JCM 14847 / LMG 12228 / 1C / PRS 101 / PAO1).